We begin with the raw amino-acid sequence, 419 residues long: Cytosine permease (419 aa).

At 1 to 19 the chain is on the cytoplasmic side; it reads MSQDNNFSQGPVPQSARKG. Residues 20 to 39 form a helical membrane-spanning segment; that stretch reads VLALTFVMLGLTFFSASMWT. Residues 40 to 51 lie on the Periplasmic side of the membrane; the sequence is GGTLGTGLSYHD. The chain crosses the membrane as a helical span at residues 52–71; that stretch reads FFLAVLIGNLLLGIYTSFLG. Residues 72–100 are Cytoplasmic-facing; sequence YIGAKTGLTTHLLARFSFGVKGSWLPSLL. A helical membrane pass occupies residues 101–120; it reads LGGTQVGWFGVGVAMFAIPV. The Periplasmic portion of the chain corresponds to 121–127; sequence GKATGLD. Residues 128–147 form a helical membrane-spanning segment; it reads INLLIAVSGLLMTVTVFFGI. Residues 148 to 152 lie on the Cytoplasmic side of the membrane; sequence SALTV. The chain crosses the membrane as a helical span at residues 153–172; that stretch reads LSLIAVPAIACLGGYSVWLA. The Periplasmic portion of the chain corresponds to 173-192; that stretch reads VNGMGGLDALKAVVPAQPLD. Residues 193–212 traverse the membrane as a helical segment; sequence FNVALALVVGSFISAGTLTA. Topologically, residues 213–221 are cytoplasmic; sequence DFVRFGRNA. A helical transmembrane segment spans residues 222 to 242; the sequence is KLAVLVAMVAFFLGNSLMFIF. Residues 243–257 lie on the Periplasmic side of the membrane; that stretch reads GAAGAAALGMADISD. The chain crosses the membrane as a helical span at residues 258-277; the sequence is VMIAQGLLLPAIVVLGLNIW. The Cytoplasmic segment spans residues 278–300; the sequence is TTNDNALYASGLGFANITGMSSK. The helical transmembrane segment at 301 to 320 threads the bilayer; that stretch reads TLSVINGIIGTVCALWLYNN. Position 321 (Phe321) is a topological domain, periplasmic. The chain crosses the membrane as a helical span at residues 322–341; it reads VGWLTFLSAAIPPVGGVIIA. Topologically, residues 342-358 are cytoplasmic; sequence DYLMNRRRYEHFATTRM. A helical transmembrane segment spans residues 359-378; it reads MSVNWVAILAVALGIAAGHW. Over 379 to 380 the chain is Periplasmic; it reads LP. A helical transmembrane segment spans residues 381-400; the sequence is GIVPVNAVLGGALSYLILNP. At 401–419 the chain is on the cytoplasmic side; it reads ILNRKTTAAMTHVEANSVE.

The protein belongs to the purine-cytosine permease (2.A.39) family.

The protein localises to the cell inner membrane. Its function is as follows. Required for cytosine transport into the cell. The polypeptide is Cytosine permease (codB) (Escherichia coli O157:H7).